Reading from the N-terminus, the 283-residue chain is Methyltransferase cpsF (283 aa).

This sequence belongs to the methyltransferase superfamily. LaeA methyltransferase family.

It catalyses the reaction campesine A + S-adenosyl-L-methionine = campesine B + S-adenosyl-L-homocysteine + H(+). The protein operates within alkaloid biosynthesis. In terms of biological role, methyltransferase; part of the gene cluster that mediates the biosynthesis of campesine G, a dimeric indole piperazine alkaloid that shows good insecticidal activity Galleria mellonella. Within the pathway, cpsF methylates campesine A at N13 of piperazine ring to produce campesine B. The non-canonical non-ribosomal peptide synthetase cpsA catalyzes the first steps of the pathway by producing L-tryptophanal and L-valinal from their respective amino-acids. These products condensate spontaneously to form trypyl-valyl pyrazine also known as didehydrocampesine A. The NmrA-like family domain-containing oxidoreductase cpsB is the next enzyme in cps pathway and reduces the unstable didehydrocampesine A to campesine A. The methyltransferase cpsF and the acetyltransferase cpsE both recognize N13 of piperazine ring to carry out methylation and acetylation of campesine A to produce campesine C and B, respectively. The cytochrome P450 monooxygenase cpsD then acts as a dimerase that catalyzes oxidative heterocoupling between campesine B and C to produce heterodimers with unexpected 6/5/6/6/6/6/5/6 eight-ring scaffold called campesine D. Finally,the cytochrome P450 monooxygenase cpsC is a regioselective dehydrogenase that catalyzes dehydrogenation reaction towards C2-N1 to produce campesine G. This is Methyltransferase cpsF from Aspergillus campestris (strain IBT 28561).